An 876-amino-acid polypeptide reads, in one-letter code: Aspartate--tRNA(Asp/Asn) ligase (876 aa).

The segment at 1-278 is unknown; that stretch reads MAATDTPWRP…FGFKRAYEGF (278 aa). The segment at 279-876 is aspartyl-tRNA synthetase; it reads MHVYRSHTCG…PKPKKEVKEG (598 aa). Position 453 (Glu453) interacts with L-aspartate. The tract at residues 477-480 is aspartate; the sequence is QQFK. Positions 499 and 729 each coordinate L-aspartate. ATP is bound at residue 499–501; sequence RDE. Residue Glu763 participates in ATP binding. Arg770 contacts L-aspartate. Residue 815-818 coordinates ATP; that stretch reads GVDR.

Belongs to the class-II aminoacyl-tRNA synthetase family. Type 1 subfamily. As to quaternary structure, homodimer.

It localises to the cytoplasm. The catalysed reaction is tRNA(Asx) + L-aspartate + ATP = L-aspartyl-tRNA(Asx) + AMP + diphosphate. Aspartyl-tRNA synthetase with relaxed tRNA specificity since it is able to aspartylate not only its cognate tRNA(Asp) but also tRNA(Asn). Reaction proceeds in two steps: L-aspartate is first activated by ATP to form Asp-AMP and then transferred to the acceptor end of tRNA(Asp/Asn). This is Aspartate--tRNA(Asp/Asn) ligase (aspS) from Paramagnetospirillum magneticum (strain ATCC 700264 / AMB-1) (Magnetospirillum magneticum).